We begin with the raw amino-acid sequence, 468 residues long: Two-component response regulator-like APRR9 (468 aa).

A Response regulatory domain is found at 38-156 (RVLLVESDYS…ELKNLWQHVW (119 aa)). Polar residues-rich tracts occupy residues 168–177 (HAQSLPASQH) and 194–203 (DQGSGAQAIN). Disordered regions lie at residues 168–203 (HAQSLPASQHNLEDTDETCEDSRYHSDQGSGAQAIN), 302–416 (VVAL…SRSQ), and 442–468 (RKKLAEQRPRVKGQFVRTVNSDASTKS). Residues 315 to 327 (TPTESHEKLRKVT) show a composition bias toward basic and acidic residues. Residues 328–364 (SDQGSATTSSNQENIGSSSVSFRNQVLQSTVTNQKQD) are compositionally biased toward polar residues. Basic and acidic residues-rich tracts occupy residues 371 to 382 (SNREKAASKEVE) and 400 to 409 (EKPKEEESAK). A CCT domain is found at 417–459 (REAALMKFRLKRKDRCFDKKVRYQSRKKLAEQRPRVKGQFVRT). A compositionally biased stretch (polar residues) spans 458–468 (RTVNSDASTKS).

Belongs to the ARR-like family. Phosphorylated. Phosphorylation varies throughout the diurnal cycle.

Its subcellular location is the nucleus. Its function is as follows. Transcriptional repressor of CCA1 and LHY, and positive regulator of LWD1 and LWD2 expression. Controls photoperiodic flowering response and temperature compensation. Involved in the positive and negative feedback loops of the circadian clock. Expression of several members of the ARR-like family is controlled by circadian rhythm. Regulated at the transcriptional level by a corepressor complex consisting of ELF4, ELF3, and LUX. APRR9, APRR7, and APRR5 coordinately act on the upstream region of the target genes to repress their expression from noon until midnight. The particular coordinated sequential expression of APRR9, APRR7, APRR5, APRR3 and APPR1 result to circadian waves that may be at the basis of the endogenous circadian clock. This is Two-component response regulator-like APRR9 (APRR9) from Arabidopsis thaliana (Mouse-ear cress).